We begin with the raw amino-acid sequence, 447 residues long: Argininosuccinate synthase (447 aa).

ATP is bound by residues 17-25 (AFSGGLDTS) and alanine 43. An L-citrulline-binding site is contributed by tyrosine 99. The ATP site is built by glycine 129 and threonine 131. Residues threonine 131, asparagine 135, and aspartate 136 each contribute to the L-aspartate site. Asparagine 135 is a binding site for L-citrulline. Aspartate 136 serves as a coordination point for ATP. Residues arginine 139 and serine 192 each contribute to the L-citrulline site. ATP is bound at residue aspartate 194. L-citrulline-binding residues include threonine 201, glutamate 203, and glutamate 280.

It belongs to the argininosuccinate synthase family. Type 2 subfamily. As to quaternary structure, homotetramer.

It localises to the cytoplasm. The enzyme catalyses L-citrulline + L-aspartate + ATP = 2-(N(omega)-L-arginino)succinate + AMP + diphosphate + H(+). The protein operates within amino-acid biosynthesis; L-arginine biosynthesis; L-arginine from L-ornithine and carbamoyl phosphate: step 2/3. This chain is Argininosuccinate synthase, found in Escherichia coli O1:K1 / APEC.